A 306-amino-acid polypeptide reads, in one-letter code: Putative S-adenosyl-L-methionine-dependent methyltransferase FRAAL5401 (306 aa).

Residues Asp-126 and 155-156 each bind S-adenosyl-L-methionine; that span reads DL. The tract at residues 201-225 is disordered; the sequence is LSAPESRVATENRPNPKPGDEDRTK.

The protein belongs to the UPF0677 family.

Exhibits S-adenosyl-L-methionine-dependent methyltransferase activity. The protein is Putative S-adenosyl-L-methionine-dependent methyltransferase FRAAL5401 of Frankia alni (strain DSM 45986 / CECT 9034 / ACN14a).